A 218-amino-acid chain; its full sequence is ATP phosphoribosyltransferase (218 aa).

It belongs to the ATP phosphoribosyltransferase family. Short subfamily. As to quaternary structure, heteromultimer composed of HisG and HisZ subunits.

It localises to the cytoplasm. It catalyses the reaction 1-(5-phospho-beta-D-ribosyl)-ATP + diphosphate = 5-phospho-alpha-D-ribose 1-diphosphate + ATP. The protein operates within amino-acid biosynthesis; L-histidine biosynthesis; L-histidine from 5-phospho-alpha-D-ribose 1-diphosphate: step 1/9. Functionally, catalyzes the condensation of ATP and 5-phosphoribose 1-diphosphate to form N'-(5'-phosphoribosyl)-ATP (PR-ATP). Has a crucial role in the pathway because the rate of histidine biosynthesis seems to be controlled primarily by regulation of HisG enzymatic activity. This Synechococcus elongatus (strain ATCC 33912 / PCC 7942 / FACHB-805) (Anacystis nidulans R2) protein is ATP phosphoribosyltransferase.